Here is a 173-residue protein sequence, read N- to C-terminus: Ribosome maturation factor RimM (173 aa).

One can recognise a PRC barrel domain in the interval 98-170 (EDEYYWCDLL…RMTVSLPEGL (73 aa)).

This sequence belongs to the RimM family. In terms of assembly, binds ribosomal protein uS19.

It localises to the cytoplasm. Its function is as follows. An accessory protein needed during the final step in the assembly of 30S ribosomal subunit, possibly for assembly of the head region. Essential for efficient processing of 16S rRNA. May be needed both before and after RbfA during the maturation of 16S rRNA. It has affinity for free ribosomal 30S subunits but not for 70S ribosomes. The polypeptide is Ribosome maturation factor RimM (Geotalea uraniireducens (strain Rf4) (Geobacter uraniireducens)).